The sequence spans 874 residues: Valine--tRNA ligase (874 aa).

Over residues 1–10 (MTENSQQQPP) the composition is skewed to polar residues. The tract at residues 1–23 (MTENSQQQPPASEPELPTQYAPA) is disordered. Residues 57 to 67 (PNVTGSLHLGH) carry the 'HIGH' region motif. Residues 531–535 (KMSKS) carry the 'KMSKS' region motif. Lys-534 contributes to the ATP binding site. The stretch at 806–871 (IDIVAERKRL…ARIQAQLDRM (66 aa)) forms a coiled coil.

This sequence belongs to the class-I aminoacyl-tRNA synthetase family. ValS type 1 subfamily. In terms of assembly, monomer.

It localises to the cytoplasm. It catalyses the reaction tRNA(Val) + L-valine + ATP = L-valyl-tRNA(Val) + AMP + diphosphate. In terms of biological role, catalyzes the attachment of valine to tRNA(Val). As ValRS can inadvertently accommodate and process structurally similar amino acids such as threonine, to avoid such errors, it has a 'posttransfer' editing activity that hydrolyzes mischarged Thr-tRNA(Val) in a tRNA-dependent manner. This is Valine--tRNA ligase from Streptomyces avermitilis (strain ATCC 31267 / DSM 46492 / JCM 5070 / NBRC 14893 / NCIMB 12804 / NRRL 8165 / MA-4680).